The sequence spans 314 residues: Ribosomal RNA small subunit methyltransferase H (314 aa).

S-adenosyl-L-methionine is bound by residues 36-38, Asp56, Phe82, Asp104, and Gln111; that span reads GGH.

The protein belongs to the methyltransferase superfamily. RsmH family.

It is found in the cytoplasm. The catalysed reaction is cytidine(1402) in 16S rRNA + S-adenosyl-L-methionine = N(4)-methylcytidine(1402) in 16S rRNA + S-adenosyl-L-homocysteine + H(+). Functionally, specifically methylates the N4 position of cytidine in position 1402 (C1402) of 16S rRNA. This is Ribosomal RNA small subunit methyltransferase H from Ectopseudomonas mendocina (strain ymp) (Pseudomonas mendocina).